We begin with the raw amino-acid sequence, 378 residues long: 3-hydroxyisobutyryl-CoA hydrolase 1 (378 aa).

An N-acetylalanine modification is found at Ala-2. Substrate contacts are provided by Glu-94, Gly-119, Glu-142, and Asp-150.

It belongs to the enoyl-CoA hydratase/isomerase family. Expressed in roots, leaves, flowers and siliques.

It is found in the peroxisome. It carries out the reaction 3-hydroxy-2-methylpropanoyl-CoA + H2O = 3-hydroxy-2-methylpropanoate + CoA + H(+). It participates in amino-acid degradation; L-valine degradation. With respect to regulation, inhibited by copper. Involved in valine catabolism. May be indirectly involved in benzoic acid biosynthesis and in cold signaling and cold tolerance. The polypeptide is 3-hydroxyisobutyryl-CoA hydrolase 1 (CHY1) (Arabidopsis thaliana (Mouse-ear cress)).